We begin with the raw amino-acid sequence, 712 residues long: Polyribonucleotide nucleotidyltransferase (712 aa).

Positions 487 and 493 each coordinate Mg(2+). The KH domain occupies P554–I613. The S1 motif domain maps to G623–K691.

This sequence belongs to the polyribonucleotide nucleotidyltransferase family. The cofactor is Mg(2+).

The protein resides in the cytoplasm. The enzyme catalyses RNA(n+1) + phosphate = RNA(n) + a ribonucleoside 5'-diphosphate. Involved in mRNA degradation. Catalyzes the phosphorolysis of single-stranded polyribonucleotides processively in the 3'- to 5'-direction. The sequence is that of Polyribonucleotide nucleotidyltransferase from Rhizobium etli (strain CIAT 652).